The primary structure comprises 185 residues: Ribosome-recycling factor (185 aa).

This sequence belongs to the RRF family.

It localises to the cytoplasm. Functionally, responsible for the release of ribosomes from messenger RNA at the termination of protein biosynthesis. May increase the efficiency of translation by recycling ribosomes from one round of translation to another. The protein is Ribosome-recycling factor of Beutenbergia cavernae (strain ATCC BAA-8 / DSM 12333 / CCUG 43141 / JCM 11478 / NBRC 16432 / NCIMB 13614 / HKI 0122).